We begin with the raw amino-acid sequence, 108 residues long: Mitochondrial import inner membrane translocase subunit tim-13 (108 aa).

The Twin CX3C motif motif lies at 45-68; the sequence is CTNKCITAPGSSLASGEKQCLQRC. Intrachain disulfides connect Cys-45/Cys-68 and Cys-49/Cys-64. The tract at residues 89-108 is disordered; that stretch reads EEMASSGGMGGGFGQGPSFS. Residues 95 to 108 are compositionally biased toward gly residues; that stretch reads GGMGGGFGQGPSFS.

It belongs to the small Tim family. As to quaternary structure, heterohexamer; composed of 3 copies of tim-8/ddp-1 and 3 copies of tin-13/tim-13, named soluble 70 kDa complex. Associates with the TIM22 complex, whose core is composed of tim-22.

Its subcellular location is the mitochondrion inner membrane. Functionally, mitochondrial intermembrane chaperone that participates in the import and insertion of some multi-pass transmembrane proteins into the mitochondrial inner membrane. Also required for the transfer of beta-barrel precursors from the TOM complex to the sorting and assembly machinery (SAM complex) of the outer membrane. Acts as a chaperone-like protein that protects the hydrophobic precursors from aggregation and guide them through the mitochondrial intermembrane space. The tim-8-tim-13 complex mediates the import of some proteins while the predominant tim-9/tin-9.1-tim-10/tin-10 70 kDa complex mediates the import of much more proteins. The chain is Mitochondrial import inner membrane translocase subunit tim-13 (tin-13) from Caenorhabditis elegans.